A 548-amino-acid chain; its full sequence is Mercuric reductase (548 aa).

The 65-residue stretch at 1–65 folds into the HMA domain; it reads MTEITVNGMT…AIAALGYQGS (65 aa). The a metal cation site is built by C11 and C14. 3 residues coordinate FAD: A97, G117, and T122. Residues C123 and C128 are joined by a disulfide bond. FAD is bound by residues K132, A198, D390, and V398. The Hg(2+) site is built by C545 and C546.

Belongs to the class-I pyridine nucleotide-disulfide oxidoreductase family. In terms of assembly, homodimer. It depends on FAD as a cofactor.

It carries out the reaction Hg + NADP(+) + H(+) = Hg(2+) + NADPH. Its function is as follows. Resistance to Hg(2+) in bacteria appears to be governed by a specialized system which includes mercuric reductase. MerA protein is responsible for volatilizing mercury as Hg(0). The sequence is that of Mercuric reductase (merA) from Pseudomonas fluorescens.